Consider the following 431-residue polypeptide: UPF0597 protein BVU_2091 (431 aa).

The protein belongs to the UPF0597 family.

This is UPF0597 protein BVU_2091 from Phocaeicola vulgatus (strain ATCC 8482 / DSM 1447 / JCM 5826 / CCUG 4940 / NBRC 14291 / NCTC 11154) (Bacteroides vulgatus).